Reading from the N-terminus, the 66-residue chain is MGQKTALGTLLKAIGNSGQGKVVPGWGAVPIMTVIGLLLLVFLVILLQIYNQSLLLQGFSVDWNGN.

Residues 27–47 traverse the membrane as a helical segment; that stretch reads GAVPIMTVIGLLLLVFLVILL.

It belongs to the PsbH family. PSII is composed of 1 copy each of membrane proteins PsbA, PsbB, PsbC, PsbD, PsbE, PsbF, PsbH, PsbI, PsbJ, PsbK, PsbL, PsbM, PsbT, PsbX, PsbY, Psb30/Ycf12, peripheral proteins PsbO, CyanoQ (PsbQ), PsbU, PsbV and a large number of cofactors. It forms dimeric complexes.

It localises to the cellular thylakoid membrane. One of the components of the core complex of photosystem II (PSII), required for its stability and/or assembly. PSII is a light-driven water:plastoquinone oxidoreductase that uses light energy to abstract electrons from H(2)O, generating O(2) and a proton gradient subsequently used for ATP formation. It consists of a core antenna complex that captures photons, and an electron transfer chain that converts photonic excitation into a charge separation. In Prochlorococcus marinus (strain MIT 9515), this protein is Photosystem II reaction center protein H.